The primary structure comprises 262 residues: Small ribosomal subunit protein uS2 (262 aa).

Residues 225-262 form a disordered region; the sequence is KQGEQLTEEAKPEDKEDEKGQAEEKEVKEENNSANKEE. The span at 232-262 shows a compositional bias: basic and acidic residues; the sequence is EEAKPEDKEDEKGQAEEKEVKEENNSANKEE.

Belongs to the universal ribosomal protein uS2 family.

This is Small ribosomal subunit protein uS2 from Halothermothrix orenii (strain H 168 / OCM 544 / DSM 9562).